The chain runs to 729 residues: Fatty acid oxidation complex subunit alpha (729 aa).

Positions 1–189 (MLYQGESLYL…KVGLVQAVVA (189 aa)) are enoyl-CoA hydratase/isomerase. Residue aspartate 296 coordinates substrate. The interval 311–729 (PVPQQAAVLG…HADVSHGQPA (419 aa)) is 3-hydroxyacyl-CoA dehydrogenase. Residues methionine 324, aspartate 343, 400–402 (VVE), lysine 407, and serine 429 contribute to the NAD(+) site. Histidine 450 serves as the catalytic For 3-hydroxyacyl-CoA dehydrogenase activity. Asparagine 453 contributes to the NAD(+) binding site. Residues asparagine 500 and tyrosine 660 each contribute to the substrate site.

It in the N-terminal section; belongs to the enoyl-CoA hydratase/isomerase family. The protein in the C-terminal section; belongs to the 3-hydroxyacyl-CoA dehydrogenase family. As to quaternary structure, heterotetramer of two alpha chains (FadB) and two beta chains (FadA).

It carries out the reaction a (3S)-3-hydroxyacyl-CoA + NAD(+) = a 3-oxoacyl-CoA + NADH + H(+). The catalysed reaction is a (3S)-3-hydroxyacyl-CoA = a (2E)-enoyl-CoA + H2O. It catalyses the reaction a 4-saturated-(3S)-3-hydroxyacyl-CoA = a (3E)-enoyl-CoA + H2O. The enzyme catalyses (3S)-3-hydroxybutanoyl-CoA = (3R)-3-hydroxybutanoyl-CoA. It carries out the reaction a (3Z)-enoyl-CoA = a 4-saturated (2E)-enoyl-CoA. The catalysed reaction is a (3E)-enoyl-CoA = a 4-saturated (2E)-enoyl-CoA. It participates in lipid metabolism; fatty acid beta-oxidation. Its function is as follows. Involved in the aerobic and anaerobic degradation of long-chain fatty acids via beta-oxidation cycle. Catalyzes the formation of 3-oxoacyl-CoA from enoyl-CoA via L-3-hydroxyacyl-CoA. It can also use D-3-hydroxyacyl-CoA and cis-3-enoyl-CoA as substrate. This is Fatty acid oxidation complex subunit alpha from Pectobacterium atrosepticum (strain SCRI 1043 / ATCC BAA-672) (Erwinia carotovora subsp. atroseptica).